Consider the following 256-residue polypeptide: Isoprenyl transferase (256 aa).

Residue Asp33 is part of the active site. Residue Asp33 coordinates Mg(2+). Substrate contacts are provided by residues 34–37, Trp38, Arg46, His50, and 78–80; these read GNGR and STE. The active-site Proton acceptor is Asn81. Residues Trp82, Arg84, Arg201, and 207–209 each bind substrate; that span reads RIS. Glu220 lines the Mg(2+) pocket.

This sequence belongs to the UPP synthase family. As to quaternary structure, homodimer. The cofactor is Mg(2+).

Its function is as follows. Catalyzes the condensation of isopentenyl diphosphate (IPP) with allylic pyrophosphates generating different type of terpenoids. The protein is Isoprenyl transferase of Staphylococcus haemolyticus (strain JCSC1435).